Reading from the N-terminus, the 307-residue chain is Ribosomal RNA small subunit methyltransferase H (307 aa).

Residues 33–35, Asp52, Leu83, Asp97, and Gln104 each bind S-adenosyl-L-methionine; that span reads AGH.

Belongs to the methyltransferase superfamily. RsmH family.

The protein resides in the cytoplasm. It catalyses the reaction cytidine(1402) in 16S rRNA + S-adenosyl-L-methionine = N(4)-methylcytidine(1402) in 16S rRNA + S-adenosyl-L-homocysteine + H(+). Functionally, specifically methylates the N4 position of cytidine in position 1402 (C1402) of 16S rRNA. In Sulfurovum sp. (strain NBC37-1), this protein is Ribosomal RNA small subunit methyltransferase H.